The following is a 414-amino-acid chain: Arrestin domain-containing protein 3 (414 aa).

2 short sequence motifs (PPxY motif) span residues 346–349 (PPSY) and 391–394 (PPLY). Positions 393–414 (LYSEIDPNPDQSSEDRPSCPSR) are disordered. Positions 405-414 (SEDRPSCPSR) are enriched in basic and acidic residues.

It belongs to the arrestin family. In terms of assembly, interacts (via PPxY motifs) with NEDD4 (via WW domains). Interacts with ADRB2. Interacts with ADRB3. Interacts with HGS (via PPxY motifs). Does not bind TXN (thioredoxin). Interacts with ITCH. In terms of tissue distribution, detected in visceral fat, subcutaneous fat, brown fat and skeletal muscle, and at lower levels in kidney.

It localises to the cytoplasm. The protein localises to the cell membrane. Its subcellular location is the lysosome. It is found in the endosome. The protein resides in the early endosome. Functionally, adapter protein that plays a role in regulating cell-surface expression of adrenergic receptors and probably also other G protein-coupled receptors. Plays a role in NEDD4-mediated ubiquitination and endocytosis af activated ADRB2 and subsequent ADRB2 degradation. May recruit NEDD4 to ADRB2. Alternatively, may function as adapter protein that does not play a major role in recruiting NEDD4 to ADRB2, but rather plays a role in a targeting ADRB2 to endosomes. This chain is Arrestin domain-containing protein 3 (Arrdc3), found in Mus musculus (Mouse).